The sequence spans 327 residues: Aspartate--ammonia ligase (327 aa).

It belongs to the class-II aminoacyl-tRNA synthetase family. AsnA subfamily.

Its subcellular location is the cytoplasm. It carries out the reaction L-aspartate + NH4(+) + ATP = L-asparagine + AMP + diphosphate + H(+). The protein operates within amino-acid biosynthesis; L-asparagine biosynthesis; L-asparagine from L-aspartate (ammonia route): step 1/1. The sequence is that of Aspartate--ammonia ligase from Bacillus anthracis (strain A0248).